Here is a 738-residue protein sequence, read N- to C-terminus: NADH dehydrogenase [ubiquinone] iron-sulfur protein 1, mitochondrial (738 aa).

The N-terminal 27 residues, 1–27 (MGLGLLASRALRSSRIIRNSTRTIVST), are a transit peptide targeting the mitochondrion. A 2Fe-2S ferredoxin-type domain is found at 66–144 (DVIEVFVDGY…GMKIKTDTPI (79 aa)). [2Fe-2S] cluster is bound by residues Cys-100, Cys-111, Cys-114, and Cys-128. Positions 144–183 (IAKKAREGVMEFLLMNHPLDCPICDQGGECDLQDQSMAFG) constitute a 4Fe-4S His(Cys)3-ligated-type domain. Residues His-160, Cys-164, Cys-167, Cys-173, Cys-212, Cys-215, Cys-218, and Cys-262 each contribute to the [4Fe-4S] cluster site. One can recognise a 4Fe-4S Mo/W bis-MGD-type domain in the interval 281 to 337 (LKGTESIDVTDAVGSNIRIDSRGPEVMRVVPRLNEDINEEWISDKTRFFYDGLKRQR).

This sequence belongs to the complex I 75 kDa subunit family. Complex I is composed of about 45 different subunits. This is a component of the iron-sulfur (IP) fragment of the enzyme. The cofactor is [2Fe-2S] cluster. [4Fe-4S] cluster is required as a cofactor.

It localises to the mitochondrion inner membrane. It carries out the reaction a ubiquinone + NADH + 5 H(+)(in) = a ubiquinol + NAD(+) + 4 H(+)(out). In terms of biological role, core subunit of the mitochondrial membrane respiratory chain NADH dehydrogenase (Complex I) that is believed to belong to the minimal assembly required for catalysis. Complex I functions in the transfer of electrons from NADH to the respiratory chain. The immediate electron acceptor for the enzyme is believed to be ubiquinone. This is the largest subunit of complex I and it is a component of the iron-sulfur (IP) fragment of the enzyme. It may form part of the active site crevice where NADH is oxidized. The protein is NADH dehydrogenase [ubiquinone] iron-sulfur protein 1, mitochondrial of Solanum tuberosum (Potato).